The sequence spans 281 residues: NADPH-dependent 7-cyano-7-deazaguanine reductase (281 aa).

Residue 87-89 (VES) participates in substrate binding. An NADPH-binding site is contributed by 89-90 (SK). Cysteine 188 serves as the catalytic Thioimide intermediate. Aspartate 195 acts as the Proton donor in catalysis. 227–228 (HE) contributes to the substrate binding site. An NADPH-binding site is contributed by 256–257 (RG).

Belongs to the GTP cyclohydrolase I family. QueF type 2 subfamily. In terms of assembly, homodimer.

Its subcellular location is the cytoplasm. The catalysed reaction is 7-aminomethyl-7-carbaguanine + 2 NADP(+) = 7-cyano-7-deazaguanine + 2 NADPH + 3 H(+). It functions in the pathway tRNA modification; tRNA-queuosine biosynthesis. Catalyzes the NADPH-dependent reduction of 7-cyano-7-deazaguanine (preQ0) to 7-aminomethyl-7-deazaguanine (preQ1). The chain is NADPH-dependent 7-cyano-7-deazaguanine reductase from Aliivibrio fischeri (strain ATCC 700601 / ES114) (Vibrio fischeri).